Reading from the N-terminus, the 160-residue chain is Putative pre-16S rRNA nuclease (160 aa).

The protein belongs to the YqgF nuclease family.

It localises to the cytoplasm. In terms of biological role, could be a nuclease involved in processing of the 5'-end of pre-16S rRNA. The protein is Putative pre-16S rRNA nuclease of Gluconobacter oxydans (strain 621H) (Gluconobacter suboxydans).